The primary structure comprises 1485 residues: Chromosome partition protein MukB (1485 aa).

Residue 34–41 (GGNGAGKS) participates in ATP binding. Coiled-coil stretches lie at residues 337–480 (LNLV…QAYQ), 509–605 (QHLA…PVWL), 780–805 (RAARENRLETLYQERDRLAERYATLS), 835–915 (EAEI…IQQH), 977–1116 (GMLT…AKAG), and 1210–1235 (EAIEQMEIELGRLTEELTAREQKLAI). Residues 666–783 (PSGAEDARLI…EVPLFGRAAR (118 aa)) form a flexible hinge region.

The protein belongs to the SMC family. MukB subfamily. Homodimerization via its hinge domain. Binds to DNA via its C-terminal region. Interacts, and probably forms a ternary complex, with MukE and MukF via its C-terminal region. The complex formation is stimulated by calcium or magnesium. Interacts with tubulin-related protein FtsZ.

The protein resides in the cytoplasm. Its subcellular location is the nucleoid. Plays a central role in chromosome condensation, segregation and cell cycle progression. Functions as a homodimer, which is essential for chromosome partition. Involved in negative DNA supercoiling in vivo, and by this means organize and compact chromosomes. May achieve or facilitate chromosome segregation by condensation DNA from both sides of a centrally located replisome during cell division. In Yersinia pseudotuberculosis serotype O:1b (strain IP 31758), this protein is Chromosome partition protein MukB.